The sequence spans 151 residues: MKKIDIKILDPRVGNEFPLPTYATEGSAGLDLRACLSEAVDLLPGQTTLLPTGLAIHIGDSSLAAVILPRSGLGHKHGVVLGNLVGLIDSDYQGQLMVSVWNRGQQPFTIEPGERIAQMVFVPVIQAEFNLVEDFDLSERGTGGFGHSGRQ.

Residues 70 to 72, asparagine 83, 87 to 89, and methionine 97 each bind substrate; these read RSG and LID.

This sequence belongs to the dUTPase family. Mg(2+) serves as cofactor.

The enzyme catalyses dUTP + H2O = dUMP + diphosphate + H(+). Its pathway is pyrimidine metabolism; dUMP biosynthesis; dUMP from dCTP (dUTP route): step 2/2. This enzyme is involved in nucleotide metabolism: it produces dUMP, the immediate precursor of thymidine nucleotides and it decreases the intracellular concentration of dUTP so that uracil cannot be incorporated into DNA. The polypeptide is Deoxyuridine 5'-triphosphate nucleotidohydrolase (Yersinia enterocolitica serotype O:8 / biotype 1B (strain NCTC 13174 / 8081)).